The sequence spans 359 residues: Phosphate acyltransferase (359 aa).

The segment at 338–359 (AGGVQSAPETEAPGAHPSPHVA) is disordered.

It belongs to the PlsX family. In terms of assembly, homodimer. Probably interacts with PlsY.

It is found in the cytoplasm. The enzyme catalyses a fatty acyl-[ACP] + phosphate = an acyl phosphate + holo-[ACP]. Its pathway is lipid metabolism; phospholipid metabolism. Functionally, catalyzes the reversible formation of acyl-phosphate (acyl-PO(4)) from acyl-[acyl-carrier-protein] (acyl-ACP). This enzyme utilizes acyl-ACP as fatty acyl donor, but not acyl-CoA. This chain is Phosphate acyltransferase, found in Cupriavidus taiwanensis (strain DSM 17343 / BCRC 17206 / CCUG 44338 / CIP 107171 / LMG 19424 / R1) (Ralstonia taiwanensis (strain LMG 19424)).